A 547-amino-acid polypeptide reads, in one-letter code: CDK5RAP1-like protein (547 aa).

One can recognise an MTTase N-terminal domain in the interval 79-194 (RTVCYVTYGC…LPRLVAVAAG (116 aa)). The [4Fe-4S] cluster site is built by Cys88, Cys124, Cys157, Cys232, Cys236, and Cys239. One can recognise a Radical SAM core domain in the interval 218–475 (DSASKTAFIS…TTVFREEALK (258 aa)). The region spanning 478–543 (QALIGSEQTV…SQTLKAQLIG (66 aa)) is the TRAM domain.

It belongs to the methylthiotransferase family. MiaB subfamily. The cofactor is [4Fe-4S] cluster.

Its function is as follows. Potential regulator of CDK5 activity. The sequence is that of CDK5RAP1-like protein from Caenorhabditis elegans.